A 117-amino-acid chain; its full sequence is Class I hydrophobin 2 (117 aa).

The first 21 residues, Glu1–Ala21, serve as a signal peptide directing secretion. 4 cysteine pairs are disulfide-bonded: Cys35/Cys96, Cys42/Cys90, Cys43/Cys76, and Cys97/Cys110.

This sequence belongs to the fungal hydrophobin family. Self-assembles to form functional amyloid fibrils called rodlets. Self-assembly into fibrillar rodlets occurs spontaneously at hydrophobic:hydrophilic interfaces and the rodlets further associate laterally to form amphipathic monolayers.

It is found in the secreted. The protein resides in the cell wall. Aerial growth, conidiation, and dispersal of filamentous fungi in the environment rely upon a capability of their secreting small amphipathic proteins called hydrophobins (HPBs) with low sequence identity. Class I can self-assemble into an outermost layer of rodlet bundles on aerial cell surfaces, conferring cellular hydrophobicity that supports fungal growth, development and dispersal; whereas Class II form highly ordered films at water-air interfaces through intermolecular interactions but contribute nothing to the rodlet structure. In Pisolithus tinctorius (Dead man's foot), this protein is Class I hydrophobin 2.